The sequence spans 311 residues: Formimidoylglutamase (311 aa).

6 residues coordinate Mn(2+): His-130, Asp-155, His-157, Asp-159, Cys-242, and Asp-244.

It belongs to the arginase family. Requires Mn(2+) as cofactor.

The enzyme catalyses N-formimidoyl-L-glutamate + H2O = formamide + L-glutamate. It functions in the pathway amino-acid degradation; L-histidine degradation into L-glutamate; L-glutamate from N-formimidoyl-L-glutamate (hydrolase route): step 1/1. Its function is as follows. Catalyzes the conversion of N-formimidoyl-L-glutamate to L-glutamate and formamide. This chain is Formimidoylglutamase, found in Staphylococcus epidermidis (strain ATCC 35984 / DSM 28319 / BCRC 17069 / CCUG 31568 / BM 3577 / RP62A).